We begin with the raw amino-acid sequence, 864 residues long: MQEQYNPAEVEAQAQQYWEEHQSFNVIEDPGKEKFYCLAMFPYPSGKLHMGHVRNYTITDVIARYQRMQGKNVLHPMGWDAFGLPAENAALKHNTAPAKWTYSNTDHMRNQLKQLGFGFDWSRELTTCKPEYYQWEQWFFTRLYEKGLVYKKMSTVNWDPIDQTVLANEQVIDGRGWRSGALVERKEIPQWFIKITDYAEELLNDLDKLPNWPEQVKTMQRNWIGKSRGLEMRFDLQSPVGEFTSFDIYTTRPDTLMGVTYVSLAAEHPIAKYLADSNPALAQFIADCKVQSVAEADMATMEKKGMDTGIKALHPITGEPVAVWVANYVLMDYGSGAVMAVPAHDQRDYEFAQKYHLGITQVIAPQNGETIDLSQAAFTDKGVLVNSGEYDGLDFNAAFDAIASTLEMANKGRVKTNYRLRDWGVSRQRYWGAPIPMFNLPEGGEIPVPAHKLPILLPEEVVMNGVQSPIKADPEWKKDELDGQYVERETDTFDTFMESSWYYARYTCPNFTDGMINKAAADYWLPVDQYVGGIEHAILHLLYSRFFHKLMRDEGLVSGDEPFERLLCQGMVNAESFFIKSEGKENWIEPENVVIERDDKGRFIAAKHKITGDAVEFGGVIKMSKSKANGVDPESVINQYGADTVRLFTMFAAPPEQSLEWSDSGVEGASRFLRRLWKAVEGHINAGTPGKLDAASLPQQQKDLRRKTHETIQKVSDDYGRRQTFNTAIAAVMELLNETSKLSDRANPQGLAVEREALEAAILLLAPIVPHITQALWIELGNSGIPLNQPWPTLDESALVRSTIEVVVQVNGKLRGKIDAAVDAPKELLEQIAVQQENVQKFLEGVTVRKVIVVPNKLVNIVAN.

The 'HIGH' region signature appears at 42–52 (PYPSGKLHMGH). The 'KMSKS' region motif lies at 622–626 (KMSKS). Lysine 625 provides a ligand contact to ATP.

It belongs to the class-I aminoacyl-tRNA synthetase family.

The protein resides in the cytoplasm. The enzyme catalyses tRNA(Leu) + L-leucine + ATP = L-leucyl-tRNA(Leu) + AMP + diphosphate. In Cellvibrio japonicus (strain Ueda107) (Pseudomonas fluorescens subsp. cellulosa), this protein is Leucine--tRNA ligase.